Reading from the N-terminus, the 542-residue chain is 4-coumarate--CoA ligase-like 5 (542 aa).

The ATP site is built by S204, S205, G206, T207, T208, and K212. Residue F262 participates in (E)-4-coumaroyl-AMP binding. R282 contributes to the CoA binding site. The SBD1 stretch occupies residues 284–353; it reads DFIAALRAIE…SVFPNVELVQ (70 aa). (E)-4-coumaroyl-AMP-binding residues include G331, Q353, G354, and T358. ATP contacts are provided by Q353, G354, T358, D418, and R433. The interval 354–397 is SBD2; that stretch reads GYGLTESSGAVAATVGPEESKAYGSVGKLGSHLQAKIVDPSTGY. The (E)-4-coumaroyl-AMP site is built by K435 and K439. CoA-binding residues include K441 and G442. Residue K524 participates in ATP binding.

It belongs to the ATP-dependent AMP-binding enzyme family. Mg(2+) serves as cofactor.

It catalyses the reaction (E)-4-coumarate + ATP + CoA = (E)-4-coumaroyl-CoA + AMP + diphosphate. The catalysed reaction is (E)-4-coumarate + ATP + H(+) = (E)-4-coumaroyl-AMP + diphosphate. It carries out the reaction (E)-4-coumaroyl-AMP + CoA = (E)-4-coumaroyl-CoA + AMP + H(+). Carboxylate--CoA ligase that may use 4-coumarate as substrate. Follows a two-step reaction mechanism, wherein the carboxylate substrate first undergoes adenylation by ATP, followed by a thioesterification in the presence of CoA to yield the final CoA thioester. The chain is 4-coumarate--CoA ligase-like 5 (4CLL5) from Oryza sativa subsp. japonica (Rice).